The chain runs to 223 residues: UPF0441 protein ETA_04310 (223 aa).

The disordered stretch occupies residues 166–223 (YGAATPGRTMTVPKSALAPKPATTSTVTRGGFGESVAKQNTMQRNSSSTGSANRSMGG). The segment covering 202–223 (AKQNTMQRNSSSTGSANRSMGG) has biased composition (polar residues).

This sequence belongs to the UPF0441 family.

The polypeptide is UPF0441 protein ETA_04310 (Erwinia tasmaniensis (strain DSM 17950 / CFBP 7177 / CIP 109463 / NCPPB 4357 / Et1/99)).